The primary structure comprises 309 residues: tRNA uridine(34) hydroxylase (309 aa).

The Rhodanese domain occupies 126 to 220 (SDPEVIVIDT…YLEQIPPEES (95 aa)). The active-site Cysteine persulfide intermediate is Cys-180.

This sequence belongs to the TrhO family.

It carries out the reaction uridine(34) in tRNA + AH2 + O2 = 5-hydroxyuridine(34) in tRNA + A + H2O. Functionally, catalyzes oxygen-dependent 5-hydroxyuridine (ho5U) modification at position 34 in tRNAs. The polypeptide is tRNA uridine(34) hydroxylase (Nostoc sp. (strain PCC 7120 / SAG 25.82 / UTEX 2576)).